Here is a 463-residue protein sequence, read N- to C-terminus: GTPase Der (463 aa).

A disordered region spans residues 1–20 (MDEGDEDLISGRGFTEGARK). 2 consecutive EngA-type G domains span residues 27–190 (GVLA…KQAE) and 202–375 (RRVA…ESWD). GTP is bound by residues 33–40 (GRPNVGKS), 80–84 (DTGGW), 142–145 (NKID), 208–215 (GRPNVGKS), 255–259 (DTAGI), and 320–323 (NKWD). A KH-like domain is found at 376-458 (QRIPTGKLNA…PIQISVNIRE (83 aa)).

Belongs to the TRAFAC class TrmE-Era-EngA-EngB-Septin-like GTPase superfamily. EngA (Der) GTPase family. As to quaternary structure, associates with the 50S ribosomal subunit.

Its function is as follows. GTPase that plays an essential role in the late steps of ribosome biogenesis. This is GTPase Der from Bifidobacterium longum (strain NCC 2705).